Reading from the N-terminus, the 218-residue chain is ADP-sugar pyrophosphatase (218 aa).

Met1 carries the post-translational modification N-acetylmethionine. Ser10 carries the phosphoserine modification. Residue Trp27 coordinates substrate. Lys41 participates in a covalent cross-link: Glycyl lysine isopeptide (Lys-Gly) (interchain with G-Cter in SUMO2). The residue at position 44 (Thr44) is a Phosphothreonine. Substrate is bound by residues 45-46 and Arg83; that span reads WE. The 141-residue stretch at 56–196 folds into the Nudix hydrolase domain; that stretch reads KSADAVSVIP…EQHLTVDAKV (141 aa). Ala95 contributes to the Mg(2+) binding site. Residues 96–117 carry the Nudix box motif; that stretch reads GFIEDGESPEAAALRELEEETG. Phe97 is a substrate binding site. The Mg(2+) site is built by Glu111 and Glu115. Asp132 lines the substrate pocket. Glu165 is a Mg(2+) binding site. Residues Lys209 and Lys217 each carry the N6-acetyllysine modification.

Belongs to the Nudix hydrolase family. Homodimer. Interacts with PARG. Requires Mg(2+) as cofactor. Post-translationally, phosphorylation at Thr-44 is required for homodimer stability; dephosphorylation results in destabilization of the homodimer. Dephosphorylation at Thr-44 promotes the ATP-synthesis activity. Widely expressed. Most abundant in liver.

It is found in the nucleus. It carries out the reaction D-ribose 5-phosphate + ATP + H(+) = ADP-D-ribose + diphosphate. It catalyses the reaction ADP-D-ribose + H2O = D-ribose 5-phosphate + AMP + 2 H(+). The enzyme catalyses 8-oxo-dGDP + H2O = 8-oxo-dGMP + phosphate + H(+). Its function is as follows. Enzyme that can either act as an ADP-sugar pyrophosphatase in absence of diphosphate or catalyze the synthesis of ATP in presence of diphosphate. In absence of diphosphate, hydrolyzes with similar activities various modified nucleoside diphosphates such as ADP-ribose, ADP-mannose, ADP-glucose, 8-oxo-GDP and 8-oxo-dGDP. Can also hydrolyze other nucleotide sugars with low activity. In presence of diphosphate, mediates the synthesis of ATP in the nucleus by catalyzing the conversion of ADP-ribose to ATP and ribose 5-phosphate. Nuclear ATP synthesis takes place when dephosphorylated at Thr-44. Nuclear ATP generation is required for extensive chromatin remodeling events that are energy-consuming. Does not play a role in U8 snoRNA decapping activity. Binds U8 snoRNA. The protein is ADP-sugar pyrophosphatase of Mus musculus (Mouse).